The following is a 350-amino-acid chain: UDP-rhamnose/UDP-galactose transporter 3 (350 aa).

Helical transmembrane passes span 12 to 32 (AVSD…IIMA), 41 to 61 (GFAF…TALV), 81 to 101 (LIWF…SLML), 104 to 124 (VGFY…MEWI), 133 to 153 (EVKI…VTDV), 160 to 180 (FICA…IGSL), 200 to 220 (AFSL…KFIM), 224 to 244 (MSSG…FCNI), 257 to 277 (SFQV…WLLF), and 286 to 306 (VAGM…MELE).

The protein belongs to the TPT transporter family. TPT (TC 2.A.7.9) subfamily.

It localises to the golgi apparatus membrane. Its function is as follows. Nucleotide-sugar transporter that transports UDP-rhamnose or UDP-galactose and UMP in a strict counter-exchange mode. This chain is UDP-rhamnose/UDP-galactose transporter 3, found in Arabidopsis thaliana (Mouse-ear cress).